Here is a 136-residue protein sequence, read N- to C-terminus: Small ribosomal subunit protein uS9 (136 aa).

Belongs to the universal ribosomal protein uS9 family.

This is Small ribosomal subunit protein uS9 from Borrelia duttonii (strain Ly).